Consider the following 552-residue polypeptide: MKNTCGILLNLFLFIGCFLTCSASNTPKVQVHSGEIAGGFEYTYNGRKIYSFLGIPYASPPVQNNRFKEPQPVQPWLGVWNATVPGSACLGIEFGSGSKIIGQEDCLFLNVYTPKLPQENSAGDLMNVIVHIHGGGYYFGEGILYGPHYLLDNNDFVYVSINYRLGVLGFASTGDGVLTGNNGLKDQVAALKWIQQNIVAFGGDPNSVTITGMSAGASSVHNHLISPMSKGLFNRAIIQSGSAFCHWSTAENVAQKTKYIANLMGCPTNNSVEIVECLRSRPAKAIAKSYLNFMPWRNFPFTPFGPTVEVAGYEKFLPDIPEKLVPHDIPVLISIAQDEGLIFSTFLGLENGFNELNNNWNEHLPHILDYNYTISNENLRFKTAQDIKEFYFGDKPISKETKSNLSKMISDRSFGYGTSKAAQHIAAKNTAPVYFYEFGYSGNYSYVAFFDPKSYSRGSSPTHGDETSYVLKMDGFYVYDNEEDRKMIKTMVNIWATFIKSGVPDTENSEIWLPVSKNLADPFRFTKITQQQTFEAREQSTTGIMNFGVAYH.

Residues 1–23 form the signal peptide; it reads MKNTCGILLNLFLFIGCFLTCSA. Asn81 carries an N-linked (GlcNAc...) asparagine glycan. Cys89 and Cys106 are disulfide-bonded. Catalysis depends on Ser214, which acts as the Acyl-ester intermediate. A disulfide bond links Cys266 and Cys277. Asn269 is a glycosylation site (N-linked (GlcNAc...) asparagine). Glu339 functions as the Charge relay system in the catalytic mechanism. N-linked (GlcNAc...) asparagine glycosylation is found at Asn371, Asn404, and Asn443. Residue His463 is the Charge relay system of the active site.

It belongs to the type-B carboxylesterase/lipase family.

It carries out the reaction a carboxylic ester + H2O = an alcohol + a carboxylate + H(+). In terms of biological role, overproduction of nonspecific esterases is a common mechanism of resistance to organophosphate insecticides. The sequence is that of Esterase E4 from Myzus persicae (Green peach aphid).